A 125-amino-acid chain; its full sequence is Synaptobrevin (125 aa).

The tract at residues 1–46 (MSGPQNPQAGPGGPPSGPPQPGGPPGPPQGPPQPVQQSKRLQQTQA) is disordered. Residues 1–103 (MSGPQNPQAG…KRKFWWKNCK (103 aa)) are Cytoplasmic-facing. The span at 12-34 (GGPPSGPPQPGGPPGPPQGPPQP) shows a compositional bias: pro residues. A v-SNARE coiled-coil homology domain is found at 40 to 100 (RLQQTQAQVE…GKLKRKFWWK (61 aa)). Residues 104-123 (MMIILGGIVAVIVTVIIVWA) form a helical; Anchor for type IV membrane protein membrane-spanning segment. Residues 124-125 (AT) are Vesicular-facing.

This sequence belongs to the synaptobrevin family.

It localises to the cytoplasmic vesicle. The protein resides in the secretory vesicle. Its subcellular location is the synaptic vesicle membrane. The protein localises to the synapse. It is found in the synaptosome. Its function is as follows. Intrinsic membrane protein of small synaptic vesicles. In Doryteuthis pealeii (Longfin inshore squid), this protein is Synaptobrevin.